The primary structure comprises 139 residues: Large ribosomal subunit protein bL20 (139 aa).

Belongs to the bacterial ribosomal protein bL20 family.

Its function is as follows. Binds directly to 23S ribosomal RNA and is necessary for the in vitro assembly process of the 50S ribosomal subunit. It is not involved in the protein synthesizing functions of that subunit. This is Large ribosomal subunit protein bL20 from Leuconostoc mesenteroides subsp. mesenteroides (strain ATCC 8293 / DSM 20343 / BCRC 11652 / CCM 1803 / JCM 6124 / NCDO 523 / NBRC 100496 / NCIMB 8023 / NCTC 12954 / NRRL B-1118 / 37Y).